The chain runs to 210 residues: Ribosomal RNA small subunit methyltransferase G (210 aa).

S-adenosyl-L-methionine-binding positions include L78, 124–125 (IE), and R138.

Belongs to the methyltransferase superfamily. RNA methyltransferase RsmG family.

It is found in the cytoplasm. The enzyme catalyses guanosine(527) in 16S rRNA + S-adenosyl-L-methionine = N(7)-methylguanosine(527) in 16S rRNA + S-adenosyl-L-homocysteine. In terms of biological role, specifically methylates the N7 position of guanine in position 527 of 16S rRNA. In Bordetella bronchiseptica (strain ATCC BAA-588 / NCTC 13252 / RB50) (Alcaligenes bronchisepticus), this protein is Ribosomal RNA small subunit methyltransferase G.